The primary structure comprises 469 residues: Ribosomal protein uS12 methylthiotransferase RimO (469 aa).

Residues 34 to 144 (NKIGFVSLGC…VLEHVHQFAP (111 aa)) enclose the MTTase N-terminal domain. 6 residues coordinate [4Fe-4S] cluster: Cys-43, Cys-79, Cys-108, Cys-176, Cys-180, and Cys-183. Positions 162–399 (LTPKHYAYLK…MLVQQEISAA (238 aa)) constitute a Radical SAM core domain. The TRAM domain maps to 402 to 468 (QKRIGSTMKV…EYDLWGSLVR (67 aa)).

The protein belongs to the methylthiotransferase family. RimO subfamily. Requires [4Fe-4S] cluster as cofactor.

The protein localises to the cytoplasm. It carries out the reaction L-aspartate(89)-[ribosomal protein uS12]-hydrogen + (sulfur carrier)-SH + AH2 + 2 S-adenosyl-L-methionine = 3-methylsulfanyl-L-aspartate(89)-[ribosomal protein uS12]-hydrogen + (sulfur carrier)-H + 5'-deoxyadenosine + L-methionine + A + S-adenosyl-L-homocysteine + 2 H(+). Catalyzes the methylthiolation of an aspartic acid residue of ribosomal protein uS12. The sequence is that of Ribosomal protein uS12 methylthiotransferase RimO from Vibrio vulnificus (strain YJ016).